Reading from the N-terminus, the 317-residue chain is Lipoyl synthase (317 aa).

[4Fe-4S] cluster is bound by residues Cys56, Cys61, Cys67, Cys82, Cys86, Cys89, and Ser298. Residues 68–287 (WEDREATFLI…KEEAEQIGFS (220 aa)) enclose the Radical SAM core domain.

It belongs to the radical SAM superfamily. Lipoyl synthase family. [4Fe-4S] cluster is required as a cofactor.

Its subcellular location is the cytoplasm. The enzyme catalyses [[Fe-S] cluster scaffold protein carrying a second [4Fe-4S](2+) cluster] + N(6)-octanoyl-L-lysyl-[protein] + 2 oxidized [2Fe-2S]-[ferredoxin] + 2 S-adenosyl-L-methionine + 4 H(+) = [[Fe-S] cluster scaffold protein] + N(6)-[(R)-dihydrolipoyl]-L-lysyl-[protein] + 4 Fe(3+) + 2 hydrogen sulfide + 2 5'-deoxyadenosine + 2 L-methionine + 2 reduced [2Fe-2S]-[ferredoxin]. It functions in the pathway protein modification; protein lipoylation via endogenous pathway; protein N(6)-(lipoyl)lysine from octanoyl-[acyl-carrier-protein]: step 2/2. In terms of biological role, catalyzes the radical-mediated insertion of two sulfur atoms into the C-6 and C-8 positions of the octanoyl moiety bound to the lipoyl domains of lipoate-dependent enzymes, thereby converting the octanoylated domains into lipoylated derivatives. This chain is Lipoyl synthase, found in Streptomyces coelicolor (strain ATCC BAA-471 / A3(2) / M145).